The primary structure comprises 166 residues: UPF0304 protein VFMJ11_1926 (166 aa).

This sequence belongs to the UPF0304 family.

This Aliivibrio fischeri (strain MJ11) (Vibrio fischeri) protein is UPF0304 protein VFMJ11_1926.